Here is a 1708-residue protein sequence, read N- to C-terminus: Clathrin heavy chain 2 (1708 aa).

A globular terminal domain region spans residues 1–492; it reads MAAANAPIAM…VDNDLALKIY (492 aa). WD40-like repeat regions lie at residues 25–67, 68–113, 114–155, 156–205, 206–270, 271–314, and 315–343; these read FVTF…RPIT, ADSA…MPEQ, VVFW…ANLA, NNQI…QALE, AHAA…PDFQ, DDFP…ISPD, and PIFL…ATVN. The interval 462–478 is binding site for the uncoating ATPase, involved in lattice disassembly; sequence ENWLAEDKLECSEELGD. A flexible linker region spans residues 493 to 536; sequence IKARATPKVVAAFAERREFDKILIYSKQVGYTPDYLFLLQTILR. The tract at residues 537–648 is distal segment; sequence TDPQGAVNFA…RALQHYTELP (112 aa). The tract at residues 537–1708 is heavy chain arm; it reads TDPQGAVNFA…AYGMPPMGSY (1172 aa). CHCR repeat units follow at residues 551–697, 700–842, 847–986, 993–1138, 1142–1283, 1288–1434, and 1437–1580; these read QMEG…QIVV, AKEY…PEDF, ILSV…QLID, LPES…VSEA, FIRA…FRLA, LNII…DLIN, and LNVL…KECF. The segment at 653-1708 is proximal segment; that stretch reads VMVNTHAIEP…AYGMPPMGSY (1056 aa). The segment at 1227–1536 is involved in binding clathrin light chain; sequence AAKIIYAFIS…YIYKKAGRWK (310 aa). Residues 1564 to 1708 are trimerization; sequence SEDLLVYFIE…AYGMPPMGSY (145 aa).

This sequence belongs to the clathrin heavy chain family. Clathrin triskelions, composed of 3 heavy chains and 3 light chains, are the basic subunits of the clathrin coat.

The protein localises to the cytoplasmic vesicle membrane. It localises to the membrane. The protein resides in the coated pit. In terms of biological role, clathrin is the major protein of the polyhedral coat of coated pits and vesicles. This is Clathrin heavy chain 2 from Oryza sativa subsp. japonica (Rice).